The sequence spans 325 residues: Beta-ketoacyl-[acyl-carrier-protein] synthase III (325 aa).

Catalysis depends on residues C116 and H252. The interval 253–257 is ACP-binding; that stretch reads QANLR. N282 is an active-site residue.

The protein belongs to the thiolase-like superfamily. FabH family. As to quaternary structure, homodimer.

The protein localises to the cytoplasm. It catalyses the reaction malonyl-[ACP] + acetyl-CoA + H(+) = 3-oxobutanoyl-[ACP] + CO2 + CoA. It functions in the pathway lipid metabolism; fatty acid biosynthesis. Catalyzes the condensation reaction of fatty acid synthesis by the addition to an acyl acceptor of two carbons from malonyl-ACP. Catalyzes the first condensation reaction which initiates fatty acid synthesis and may therefore play a role in governing the total rate of fatty acid production. Possesses both acetoacetyl-ACP synthase and acetyl transacylase activities. Its substrate specificity determines the biosynthesis of branched-chain and/or straight-chain of fatty acids. This is Beta-ketoacyl-[acyl-carrier-protein] synthase III from Xanthomonas oryzae pv. oryzae (strain MAFF 311018).